Reading from the N-terminus, the 229-residue chain is Peptidase E (229 aa).

Active-site charge relay system residues include Ser120, Asp135, and His157.

It belongs to the peptidase S51 family.

The protein resides in the cytoplasm. The enzyme catalyses Dipeptidase E catalyzes the hydrolysis of dipeptides Asp-|-Xaa. It does not act on peptides with N-terminal Glu, Asn or Gln, nor does it cleave isoaspartyl peptides.. Hydrolyzes dipeptides containing N-terminal aspartate residues. May play a role in allowing the cell to use peptide aspartate to spare carbon otherwise required for the synthesis of the aspartate family of amino acids. The polypeptide is Peptidase E (Salmonella typhi).